The chain runs to 154 residues: Small ribosomal subunit protein uS13m (154 aa).

The N-terminal 30 residues, 1-30 (MLGLRRSATTLFDISQSLLRNVTFHGLRVQ), are a transit peptide targeting the mitochondrion. Positions 121-154 (RHGLPCRGQRTSTNARTKKGKAVAIAGKKKAPRK) are disordered. Basic residues predominate over residues 136-154 (RTKKGKAVAIAGKKKAPRK).

Belongs to the universal ribosomal protein uS13 family. In terms of assembly, part of the small ribosomal subunit.

The protein resides in the mitochondrion. In terms of biological role, located at the top of the head of the small subunit, it contacts several helices of the 18S rRNA. This chain is Small ribosomal subunit protein uS13m (RPS13), found in Arabidopsis thaliana (Mouse-ear cress).